Consider the following 465-residue polypeptide: E3 ubiquitin-protein ligase parkin (465 aa).

One can recognise a Ubiquitin-like domain in the interval 1–76 (MIVFVRFNSS…VHIVQRPQRK (76 aa)). A Phosphoserine; by PINK1 modification is found at Ser-65. Residues 71–96 (QRPQRKSHETNASGGDKPQSTPEGSI) form a disordered region. A necessary for PINK1-dependent localization to mitochondria region spans residues 77 to 237 (SHETNASGGD…LITNNSRSIP (161 aa)). A Phosphothreonine modification is found at Thr-80. Over residues 80–93 (TNASGGDKPQSTPE) the composition is skewed to polar residues. The RING-type 0; atypical zinc finger occupies 141-225 (PTYHSFFVYC…PTSDKDTSVA (85 aa)). Thr-175 bears the Phosphothreonine; by PINK1 mark. Positions 204–238 (TRAEFFFKCGAHPTSDKDTSVALNLITNNSRSIPC) are SYT11 binding 1. Residue Thr-217 is modified to Phosphothreonine. Positions 234-465 (RSIPCIACTD…ACMGDHWFDV (232 aa)) are TRIAD supradomain. Residues Cys-238, Cys-241, Cys-253, His-257, Cys-260, Cys-263, Cys-289, Cys-293, Cys-332, and Cys-337 each coordinate Zn(2+). The RING-type 1 zinc-finger motif lies at 238 to 293 (CIACTDVRNPVLVFQCNHRHVICLDCFHLYCVTRLNDRQFVHDAQLGYSLPCVAGC). An SYT11 binding 2 region spans residues 257-293 (HVICLDCFHLYCVTRLNDRQFVHDAQLGYSLPCVAGC). An IBR-type zinc finger spans residues 313–377 (NRYQQYGAEE…CKEAYHEGEC (65 aa)). A Glycyl lysine isopeptide (Lys-Gly) (interchain with G-Cter in ISG15) cross-link involves residue Lys-349. Zn(2+) is bound by residues Cys-352, Cys-360, Cys-365, and Cys-368. Residue Lys-369 forms a Glycyl lysine isopeptide (Lys-Gly) (interchain with G-Cter in ISG15) linkage. Residues His-373 and Cys-377 each contribute to the Zn(2+) site. Residues 378-410 (DSMFEASGATSQAYRVDQRAAEQARWEEASKET) are REP. Zn(2+) is bound by residues Cys-418 and Cys-421. An RING-type 2; atypical zinc finger spans residues 418–449 (CPRCNVPIEKNGGCMHMKCPQPQCKLEWCWNC). Residue Cys-431 is part of the active site. Zn(2+)-binding residues include Cys-436, Cys-441, Cys-446, Cys-449, Cys-457, and His-461.

It belongs to the RBR family. Parkin subfamily. Forms an E3 ubiquitin ligase complex with UBE2L3 or UBE2L6. Mediates 'Lys-63'-linked polyubiquitination by associating with UBE2V1. Part of a SCF-like complex, consisting of PRKN, CUL1 and FBXW7. Interacts with SNCAIP. Binds to the C2A and C2B domains of SYT11. Interacts and regulates the turnover of SEPTIN5. Part of a complex, including STUB1, HSP70 and GPR37. The amount of STUB1 in the complex increases during ER stress. STUB1 promotes the dissociation of HSP70 from PRKN and GPR37, thus facilitating PRKN-mediated GPR37 ubiquitination. HSP70 transiently associates with unfolded GPR37 and inhibits the E3 activity of PRKN, whereas, STUB1 enhances the E3 activity of PRKN through promotion of dissociation of HSP70 from PRKN-GPR37 complexes. Interacts with PSMD4 and PACRG. Interacts with LRRK2. Interacts with RANBP2. Interacts with SUMO1 but not SUMO2, which promotes nuclear localization and autoubiquitination. Interacts (via first RING-type domain) with AIMP2 (via N-terminus). Interacts with PSMA7 and RNF41. Interacts with PINK1. Forms a complex with PINK1 and PARK7. Interacts with CHPF, the interaction with isoform 2 may facilitate PRKN transport into the mitochondria. Interacts with MFN2 (phosphorylated), promotes PRKN localization in dysfunctional depolarized mitochondria. Interacts with FBXO7; this promotes translocation to dysfunctional depolarized mitochondria. Interacts with ZNF746. Interacts with heat shock protein 70 family members, including HSPA1L, HSPA1A and HSPA8; interaction HSPA1L promotes translocation to damaged mitochondria. Interacts with BAG4 and, to a lesser extent, BAG5; interaction with BAG4 inhibits translocation to damaged mitochondria. Forms a complex with PRKN and PARK7. Interacts with AMBRA1. In terms of processing, auto-ubiquitinates in an E2-dependent manner leading to its own degradation. Also polyubiquitinated by RNF41 for proteasomal degradation. S-nitrosylated. Post-translationally, phosphorylated. Activation requires phosphorylation at Ser-65 by PINK1 and binding to PINK1 phosphorylated ubiquitin. Phosphorylation at Thr-175 by PINK1 and at Thr-217 is important for mitochondrial localization. In terms of tissue distribution, largely confined to neuronal elements, including fibers and neuropil. Highly expressed at the forebrain level, in pyramidal cells of layer V, in various cortical regions and cerebellum. Expressed in the nucleus of diagonal band of Broca, nucleus basalis, bed nucleus of the stria terminalis, and olfactory tubercle. Moderate expression is seen in most neurons of the subthalamic nucleus, heart, skeletal muscle and testis. Moderate expression was found in frontal cortex, parietal cortex, cerebellum, heart, skeletal muscle and testis.

It localises to the cytoplasm. It is found in the cytosol. Its subcellular location is the nucleus. The protein resides in the endoplasmic reticulum. The protein localises to the mitochondrion. It localises to the mitochondrion outer membrane. It is found in the cell projection. Its subcellular location is the neuron projection. The protein resides in the postsynaptic density. The protein localises to the presynapse. It carries out the reaction [E2 ubiquitin-conjugating enzyme]-S-ubiquitinyl-L-cysteine + [acceptor protein]-L-lysine = [E2 ubiquitin-conjugating enzyme]-L-cysteine + [acceptor protein]-N(6)-ubiquitinyl-L-lysine.. Its pathway is protein modification; protein ubiquitination. With respect to regulation, in the autoinhibited state the side chain of Phe-463 inserts into a hydrophobic groove in RING-0, occluding the ubiquitin acceptor site Cys-431, whereas the REP repressor element binds RING-1 and blocks its E2-binding site. Activation of PRKN requires 2 steps: (1) phosphorylation at Ser-65 by PINK1 and (2) binding to phosphorylated ubiquitin, leading to unlock repression of the catalytic Cys-431 by the RING-0 region via an allosteric mechanism and converting PRKN to its fully-active form. According to another report, phosphorylation at Ser-65 by PINK1 is not essential for activation and only binding to phosphorylated ubiquitin is essential to unlock repression. In addition, ISG15 conjugation positively regulates its ubiquitin E3 ligase activity by suppressing the intramolecular interaction that maintains its autoinhibited conformation. Functionally, functions within a multiprotein E3 ubiquitin ligase complex, catalyzing the covalent attachment of ubiquitin moieties onto substrate proteins. Substrates include SYT11 and VDAC1. Other substrates are BCL2, CCNE1, GPR37, RHOT1/MIRO1, MFN1, MFN2, STUB1, SNCAIP, SEPTIN5, TOMM20, USP30, ZNF746, MIRO1 and AIMP2. Mediates monoubiquitination as well as 'Lys-6', 'Lys-11', 'Lys-48'-linked and 'Lys-63'-linked polyubiquitination of substrates depending on the context. Participates in the removal and/or detoxification of abnormally folded or damaged protein by mediating 'Lys-63'-linked polyubiquitination of misfolded proteins such as PARK7: 'Lys-63'-linked polyubiquitinated misfolded proteins are then recognized by HDAC6, leading to their recruitment to aggresomes, followed by degradation. Mediates 'Lys-63'-linked polyubiquitination of a 22 kDa O-linked glycosylated isoform of SNCAIP, possibly playing a role in Lewy-body formation. Mediates monoubiquitination of BCL2, thereby acting as a positive regulator of autophagy. Protects against mitochondrial dysfunction during cellular stress, by acting downstream of PINK1 to coordinate mitochondrial quality control mechanisms that remove and replace dysfunctional mitochondrial components. Depending on the severity of mitochondrial damage and/or dysfunction, activity ranges from preventing apoptosis and stimulating mitochondrial biogenesis to regulating mitochondrial dynamics and eliminating severely damaged mitochondria via mitophagy. Activation and recruitment onto the outer membrane of damaged/dysfunctional mitochondria (OMM) requires PINK1-mediated phosphorylation of both PRKN and ubiquitin. After mitochondrial damage, functions with PINK1 to mediate the decision between mitophagy or preventing apoptosis by inducing either the poly- or monoubiquitination of VDAC1, respectively; polyubiquitination of VDAC1 promotes mitophagy, while monoubiquitination of VDAC1 decreases mitochondrial calcium influx which ultimately inhibits apoptosis. When cellular stress results in irreversible mitochondrial damage, promotes the autophagic degradation of dysfunctional depolarized mitochondria (mitophagy) by promoting the ubiquitination of mitochondrial proteins such as TOMM20, RHOT1/MIRO1, MFN1 and USP30. Preferentially assembles 'Lys-6'-, 'Lys-11'- and 'Lys-63'-linked polyubiquitin chains, leading to mitophagy. The PINK1-PRKN pathway also promotes fission of damaged mitochondria by PINK1-mediated phosphorylation which promotes the PRKN-dependent degradation of mitochondrial proteins involved in fission such as MFN2. This prevents the refusion of unhealthy mitochondria with the mitochondrial network or initiates mitochondrial fragmentation facilitating their later engulfment by autophagosomes. Regulates motility of damaged mitochondria via the ubiquitination and subsequent degradation of MIRO1 and MIRO2; in motor neurons, this likely inhibits mitochondrial intracellular anterograde transport along the axons which probably increases the chance of the mitochondria undergoing mitophagy in the soma. Involved in mitochondrial biogenesis via the 'Lys-48'-linked polyubiquitination of transcriptional repressor ZNF746/PARIS which leads to its subsequent proteasomal degradation and allows activation of the transcription factor PPARGC1A. Limits the production of reactive oxygen species (ROS). Regulates cyclin-E during neuronal apoptosis. In collaboration with CHPF isoform 2, may enhance cell viability and protect cells from oxidative stress. Independently of its ubiquitin ligase activity, protects from apoptosis by the transcriptional repression of p53/TP53. May protect neurons against alpha synuclein toxicity, proteasomal dysfunction, GPR37 accumulation, and kainate-induced excitotoxicity. May play a role in controlling neurotransmitter trafficking at the presynaptic terminal and in calcium-dependent exocytosis. May represent a tumor suppressor gene. This chain is E3 ubiquitin-protein ligase parkin, found in Rattus norvegicus (Rat).